Here is a 487-residue protein sequence, read N- to C-terminus: Protein nucleotidyltransferase YdiU (487 aa).

ATP contacts are provided by Gly90, Gly92, Arg93, Lys113, Asp125, Gly126, Arg176, and Arg183. Asp252 serves as the catalytic Proton acceptor. 2 residues coordinate Mg(2+): Asn253 and Asp262. Asp262 is a binding site for ATP.

Belongs to the SELO family. Mg(2+) is required as a cofactor. It depends on Mn(2+) as a cofactor.

The catalysed reaction is L-seryl-[protein] + ATP = 3-O-(5'-adenylyl)-L-seryl-[protein] + diphosphate. It carries out the reaction L-threonyl-[protein] + ATP = 3-O-(5'-adenylyl)-L-threonyl-[protein] + diphosphate. The enzyme catalyses L-tyrosyl-[protein] + ATP = O-(5'-adenylyl)-L-tyrosyl-[protein] + diphosphate. It catalyses the reaction L-histidyl-[protein] + UTP = N(tele)-(5'-uridylyl)-L-histidyl-[protein] + diphosphate. The catalysed reaction is L-seryl-[protein] + UTP = O-(5'-uridylyl)-L-seryl-[protein] + diphosphate. It carries out the reaction L-tyrosyl-[protein] + UTP = O-(5'-uridylyl)-L-tyrosyl-[protein] + diphosphate. Its function is as follows. Nucleotidyltransferase involved in the post-translational modification of proteins. It can catalyze the addition of adenosine monophosphate (AMP) or uridine monophosphate (UMP) to a protein, resulting in modifications known as AMPylation and UMPylation. The polypeptide is Protein nucleotidyltransferase YdiU (Pseudomonas fluorescens (strain SBW25)).